The following is a 263-amino-acid chain: MTMSVNKSTLVLKVGGALMQCEMGMARLMETAAKMIASGQQLIMVHGGGCLVEEQLTANGMTTEKLDGLRVTPQEQVPVIVGALAGTSNKILQGAAIKAGVTCVGMSLGDGDMVSAKVKDPRLGFVGEVSPKSATYLEFILSQGWMPIVSSIAIDAAGQLLNVNADQAATVLAKLVDGKLVLLSDVSGVLDGKGQLIKSLNRSQVEELTNIGVIEKGMKVKVEAALEVAESMGQPVQVASWRHAEQLIALSNGEAVGTQIQPD.

Substrate is bound by residues 48–49 (GG), R70, and N162.

Belongs to the acetylglutamate kinase family. ArgB subfamily.

Its subcellular location is the cytoplasm. The catalysed reaction is N-acetyl-L-glutamate + ATP = N-acetyl-L-glutamyl 5-phosphate + ADP. The protein operates within amino-acid biosynthesis; L-arginine biosynthesis; N(2)-acetyl-L-ornithine from L-glutamate: step 2/4. Catalyzes the ATP-dependent phosphorylation of N-acetyl-L-glutamate. This is Acetylglutamate kinase from Shewanella sediminis (strain HAW-EB3).